The chain runs to 392 residues: Proteasome-activating nucleotidase (392 aa).

Positions 19-53 form a coiled coil; that stretch reads IVRLLEEKIESLTKELEKLRQDLNWYKGELEKLLA. Residues 178 to 183 and Tyr-317 contribute to the ATP site; that span reads GTGKTL. The segment at 390–392 is docks into pockets in the proteasome alpha-ring to cause gate opening; that stretch reads KYV.

The protein belongs to the AAA ATPase family. As to quaternary structure, homohexamer. The hexameric complex has a two-ring architecture resembling a top hat that caps the 20S proteasome core at one or both ends. Upon ATP-binding, the C-terminus of PAN interacts with the alpha-rings of the proteasome core by binding to the intersubunit pockets.

The protein resides in the cytoplasm. Functionally, ATPase which is responsible for recognizing, binding, unfolding and translocation of substrate proteins into the archaeal 20S proteasome core particle. Is essential for opening the gate of the 20S proteasome via an interaction with its C-terminus, thereby allowing substrate entry and access to the site of proteolysis. Thus, the C-termini of the proteasomal ATPase function like a 'key in a lock' to induce gate opening and therefore regulate proteolysis. Unfolding activity requires energy from ATP hydrolysis, whereas ATP binding alone promotes ATPase-20S proteasome association which triggers gate opening, and supports translocation of unfolded substrates. This chain is Proteasome-activating nucleotidase, found in Sulfurisphaera tokodaii (strain DSM 16993 / JCM 10545 / NBRC 100140 / 7) (Sulfolobus tokodaii).